The following is a 348-amino-acid chain: Phosphoribosylformylglycinamidine cyclo-ligase (348 aa).

This sequence belongs to the AIR synthase family.

It localises to the cytoplasm. It catalyses the reaction 2-formamido-N(1)-(5-O-phospho-beta-D-ribosyl)acetamidine + ATP = 5-amino-1-(5-phospho-beta-D-ribosyl)imidazole + ADP + phosphate + H(+). It participates in purine metabolism; IMP biosynthesis via de novo pathway; 5-amino-1-(5-phospho-D-ribosyl)imidazole from N(2)-formyl-N(1)-(5-phospho-D-ribosyl)glycinamide: step 2/2. This chain is Phosphoribosylformylglycinamidine cyclo-ligase, found in Roseobacter denitrificans (strain ATCC 33942 / OCh 114) (Erythrobacter sp. (strain OCh 114)).